A 518-amino-acid polypeptide reads, in one-letter code: Ell-associated factor Eaf (518 aa).

Composition is skewed to polar residues over residues K119–P128 and E163–N182. Disordered regions lie at residues K119–H216 and A241–D518. A Phosphoserine modification is found at S192. 2 stretches are compositionally biased toward polar residues: residues A253–G265 and M274–G284. The segment covering Q289–Q342 has biased composition (low complexity). Residues R343–M355 show a composition bias toward polar residues. Low complexity predominate over residues A368–A377. The span at E397–E412 shows a compositional bias: acidic residues. Composition is skewed to low complexity over residues H418–S428, Q463–Q476, and N500–D518.

Belongs to the EAF family.

Its subcellular location is the nucleus. Its function is as follows. Promotes transcriptional elongation by Su(Tpl)/ELL. Essential for development. The polypeptide is Ell-associated factor Eaf (Drosophila mojavensis (Fruit fly)).